The following is a 359-amino-acid chain: ELAV-like protein 2 (359 aa).

The tract at residues 1-33 (METQLSNGPTCNNTANGPTTINNNCSSPVDSGN) is disordered. RRM domains lie at 39 to 117 (TNLI…YARP) and 125 to 205 (ANLY…FANN). A Phosphoserine modification is found at serine 221. One can recognise an RRM 3 domain in the interval 276–354 (WCIFVYNLAP…RVLQVSFKTN (79 aa)).

This sequence belongs to the RRM elav family. Interacts with IGF2BP1. Interacts with MAP1B light chain LC1.

RNA-binding protein that binds to the 3' untranslated region (3'UTR) of target mRNAs. Seems to recognize a GAAA motif. Can bind to its own 3'UTR, the FOS 3'UTR and the ID 3'UTR. The polypeptide is ELAV-like protein 2 (ELAVL2) (Pongo abelii (Sumatran orangutan)).